Here is a 328-residue protein sequence, read N- to C-terminus: Tetraacyldisaccharide 4'-kinase (328 aa).

ATP is bound at residue 55–62 (TAGGNGKT).

It belongs to the LpxK family.

It carries out the reaction a lipid A disaccharide + ATP = a lipid IVA + ADP + H(+). Its pathway is glycolipid biosynthesis; lipid IV(A) biosynthesis; lipid IV(A) from (3R)-3-hydroxytetradecanoyl-[acyl-carrier-protein] and UDP-N-acetyl-alpha-D-glucosamine: step 6/6. Its function is as follows. Transfers the gamma-phosphate of ATP to the 4'-position of a tetraacyldisaccharide 1-phosphate intermediate (termed DS-1-P) to form tetraacyldisaccharide 1,4'-bis-phosphate (lipid IVA). This chain is Tetraacyldisaccharide 4'-kinase, found in Escherichia coli (strain SMS-3-5 / SECEC).